Consider the following 274-residue polypeptide: Nitrogenase iron protein (274 aa).

8 to 15 (GKGGIGKS) contributes to the ATP binding site. Cys-94 contributes to the [4Fe-4S] cluster binding site. The residue at position 97 (Arg-97) is an ADP-ribosylarginine; by dinitrogenase reductase ADP-ribosyltransferase. [4Fe-4S] cluster is bound at residue Cys-131.

Belongs to the NifH/BchL/ChlL family. Homodimer. The cofactor is [4Fe-4S] cluster. In terms of processing, the reversible ADP-ribosylation of Arg-97 inactivates the nitrogenase reductase and regulates nitrogenase activity.

It carries out the reaction N2 + 8 reduced [2Fe-2S]-[ferredoxin] + 16 ATP + 16 H2O = H2 + 8 oxidized [2Fe-2S]-[ferredoxin] + 2 NH4(+) + 16 ADP + 16 phosphate + 6 H(+). In terms of biological role, the key enzymatic reactions in nitrogen fixation are catalyzed by the nitrogenase complex, which has 2 components: the iron protein and the molybdenum-iron protein. This chain is Nitrogenase iron protein, found in Prosthecochloris aestuarii (strain DSM 271 / SK 413).